The sequence spans 335 residues: Holliday junction branch migration complex subunit RuvB (335 aa).

The large ATPase domain (RuvB-L) stretch occupies residues 1–183 (MDERIISSET…FGVIDHLEFY (183 aa)). Residues Leu22, Arg23, Gly64, Lys67, Thr68, Thr69, 130–132 (EDY), Arg173, Tyr183, and Arg220 contribute to the ATP site. Position 68 (Thr68) interacts with Mg(2+). The tract at residues 184–254 (TEEQLTEIVL…LAKEALTLLQ (71 aa)) is small ATPAse domain (RuvB-S). The tract at residues 257 to 335 (PRGLDTIDQK…HLGISYEKEV (79 aa)) is head domain (RuvB-H). DNA is bound by residues Arg293, Arg312, and Arg317.

It belongs to the RuvB family. As to quaternary structure, homohexamer. Forms an RuvA(8)-RuvB(12)-Holliday junction (HJ) complex. HJ DNA is sandwiched between 2 RuvA tetramers; dsDNA enters through RuvA and exits via RuvB. An RuvB hexamer assembles on each DNA strand where it exits the tetramer. Each RuvB hexamer is contacted by two RuvA subunits (via domain III) on 2 adjacent RuvB subunits; this complex drives branch migration. In the full resolvosome a probable DNA-RuvA(4)-RuvB(12)-RuvC(2) complex forms which resolves the HJ.

The protein resides in the cytoplasm. The catalysed reaction is ATP + H2O = ADP + phosphate + H(+). Its function is as follows. The RuvA-RuvB-RuvC complex processes Holliday junction (HJ) DNA during genetic recombination and DNA repair, while the RuvA-RuvB complex plays an important role in the rescue of blocked DNA replication forks via replication fork reversal (RFR). RuvA specifically binds to HJ cruciform DNA, conferring on it an open structure. The RuvB hexamer acts as an ATP-dependent pump, pulling dsDNA into and through the RuvAB complex. RuvB forms 2 homohexamers on either side of HJ DNA bound by 1 or 2 RuvA tetramers; 4 subunits per hexamer contact DNA at a time. Coordinated motions by a converter formed by DNA-disengaged RuvB subunits stimulates ATP hydrolysis and nucleotide exchange. Immobilization of the converter enables RuvB to convert the ATP-contained energy into a lever motion, pulling 2 nucleotides of DNA out of the RuvA tetramer per ATP hydrolyzed, thus driving DNA branch migration. The RuvB motors rotate together with the DNA substrate, which together with the progressing nucleotide cycle form the mechanistic basis for DNA recombination by continuous HJ branch migration. Branch migration allows RuvC to scan DNA until it finds its consensus sequence, where it cleaves and resolves cruciform DNA. This chain is Holliday junction branch migration complex subunit RuvB, found in Listeria monocytogenes serovar 1/2a (strain ATCC BAA-679 / EGD-e).